The primary structure comprises 732 residues: Catalase-peroxidase (732 aa).

The segment at residues 96–219 (WHSAGTYRIG…LGAVQMGLIY (124 aa)) is a cross-link (tryptophyl-tyrosyl-methioninium (Trp-Tyr) (with M-245)). His97 (proton acceptor) is an active-site residue. Positions 219–245 (YVNPEGPNGHPDPVASGRDIRETFGRM) form a cross-link, tryptophyl-tyrosyl-methioninium (Tyr-Met) (with W-96). His260 is a heme b binding site.

Belongs to the peroxidase family. Peroxidase/catalase subfamily. In terms of assembly, homodimer or homotetramer. It depends on heme b as a cofactor. Formation of the three residue Trp-Tyr-Met cross-link is important for the catalase, but not the peroxidase activity of the enzyme.

The catalysed reaction is H2O2 + AH2 = A + 2 H2O. The enzyme catalyses 2 H2O2 = O2 + 2 H2O. Its function is as follows. Bifunctional enzyme with both catalase and broad-spectrum peroxidase activity. The protein is Catalase-peroxidase of Acaryochloris marina (strain MBIC 11017).